A 156-amino-acid chain; its full sequence is MAKYTISKHRLEELQLELREILDVKWPAITKQLQDAREQGDLSENADYDAAKNEQAALKKRKDEIEEILENYELIEDVMRSTDEVSIGSTIEIYNYQKDHKEVITLVGSMDSDPFANKISMDTPLGKAVVKQKEGSEVTVHTLALPYKVKIIKIID.

A coiled-coil region spans residues M1–E84.

Belongs to the GreA/GreB family.

Functionally, necessary for efficient RNA polymerase transcription elongation past template-encoded arresting sites. The arresting sites in DNA have the property of trapping a certain fraction of elongating RNA polymerases that pass through, resulting in locked ternary complexes. Cleavage of the nascent transcript by cleavage factors such as GreA or GreB allows the resumption of elongation from the new 3'terminus. GreA releases sequences of 2 to 3 nucleotides. The sequence is that of Transcription elongation factor GreA from Ureaplasma urealyticum serovar 10 (strain ATCC 33699 / Western).